The primary structure comprises 163 residues: Phosphopantetheine adenylyltransferase (163 aa).

Substrate is bound at residue Ser-10. Residues 10–11 (SF) and His-18 contribute to the ATP site. Residues Lys-42, Leu-74, and Arg-88 each contribute to the substrate site. Residues 89-91 (GLR), Glu-99, and 124-130 (YSFLSSS) contribute to the ATP site.

Belongs to the bacterial CoaD family. As to quaternary structure, homohexamer. Mg(2+) is required as a cofactor.

It localises to the cytoplasm. It carries out the reaction (R)-4'-phosphopantetheine + ATP + H(+) = 3'-dephospho-CoA + diphosphate. It participates in cofactor biosynthesis; coenzyme A biosynthesis; CoA from (R)-pantothenate: step 4/5. Reversibly transfers an adenylyl group from ATP to 4'-phosphopantetheine, yielding dephospho-CoA (dPCoA) and pyrophosphate. The sequence is that of Phosphopantetheine adenylyltransferase from Bacillus anthracis (strain A0248).